Reading from the N-terminus, the 279-residue chain is MKTIECKAPAKVNYRLDVLRRRPDGYHDLRMIMQRIDLCDDIRISLSETPGVRVACGKEGVPDGPGNIAWRAADALLKLSGRCTGIDISIVKNIPVAAGLGGGSSDCASALMGVNELLELHLTDEQLMEAGSKLGADVPFFIFKKTALAEGIGDKLAAVEAAPAWLVIVNPNLAVSTAWVYQNLQLTAGKDEYIIPRFYGSVSDICAILANDLEKVTIGRFPVINQIKQKLLQVGAAGSLMSGSGSTVFGIFAEEAPARKAAEKLSRESDWFVAAVKTL.

Residue K11 is part of the active site. 95 to 105 (PVAAGLGGGSS) contributes to the ATP binding site. Residue D137 is part of the active site.

It belongs to the GHMP kinase family. IspE subfamily.

It catalyses the reaction 4-CDP-2-C-methyl-D-erythritol + ATP = 4-CDP-2-C-methyl-D-erythritol 2-phosphate + ADP + H(+). It functions in the pathway isoprenoid biosynthesis; isopentenyl diphosphate biosynthesis via DXP pathway; isopentenyl diphosphate from 1-deoxy-D-xylulose 5-phosphate: step 3/6. Its function is as follows. Catalyzes the phosphorylation of the position 2 hydroxy group of 4-diphosphocytidyl-2C-methyl-D-erythritol. The protein is 4-diphosphocytidyl-2-C-methyl-D-erythritol kinase of Geotalea daltonii (strain DSM 22248 / JCM 15807 / FRC-32) (Geobacter daltonii).